A 186-amino-acid polypeptide reads, in one-letter code: Shikimate kinase (186 aa).

ATP is bound at residue 15–20 (GAGKTT). T19 contributes to the Mg(2+) binding site. Positions 37, 61, and 83 each coordinate substrate. R121 serves as a coordination point for ATP. A substrate-binding site is contributed by R140.

It belongs to the shikimate kinase family. As to quaternary structure, monomer. Mg(2+) is required as a cofactor.

Its subcellular location is the cytoplasm. It catalyses the reaction shikimate + ATP = 3-phosphoshikimate + ADP + H(+). Its pathway is metabolic intermediate biosynthesis; chorismate biosynthesis; chorismate from D-erythrose 4-phosphate and phosphoenolpyruvate: step 5/7. Its function is as follows. Catalyzes the specific phosphorylation of the 3-hydroxyl group of shikimic acid using ATP as a cosubstrate. This chain is Shikimate kinase, found in Psychrobacter arcticus (strain DSM 17307 / VKM B-2377 / 273-4).